The following is an 80-amino-acid chain: Cell division activator CedA (80 aa).

Belongs to the CedA family.

Activates the cell division inhibited by chromosomal DNA over-replication. This Escherichia coli O139:H28 (strain E24377A / ETEC) protein is Cell division activator CedA.